We begin with the raw amino-acid sequence, 511 residues long: Maturase K (511 aa).

It belongs to the intron maturase 2 family. MatK subfamily.

It localises to the plastid. The protein localises to the chloroplast. Usually encoded in the trnK tRNA gene intron. Probably assists in splicing its own and other chloroplast group II introns. The chain is Maturase K from Pistia stratiotes (Water lettuce).